The chain runs to 473 residues: Hyaluronidase-2 (473 aa).

The signal sequence occupies residues 1–20; sequence MRAGLGPIITLALVLEVAWA. 2 disulfides stabilise this stretch: Cys47-Cys340 and Cys211-Cys227. N-linked (GlcNAc...) asparagine glycosylation is found at Asn74 and Asn103. Glu135 serves as the catalytic Proton donor. N-linked (GlcNAc...) asparagine glycosylation is present at Asn357. In terms of domain architecture, EGF-like spans 361-439; sequence ATQYCSWTQC…YLGWGGEQCQ (79 aa). Intrachain disulfides connect Cys365-Cys376, Cys370-Cys427, and Cys429-Cys438. A glycan (N-linked (GlcNAc...) asparagine) is linked at Asn390. A lipid anchor (GPI-anchor amidated asparagine; alternate) is attached at Asn448. Asn448 carries N-linked (GlcNAc...) asparagine; alternate glycosylation. Residues 449 to 473 constitute a propeptide, removed in mature form; sequence ASRAWAGSHLTSLLGLVAVALTWTL.

It belongs to the glycosyl hydrolase 56 family. In terms of assembly, interacts with MST1R. Widely expressed, with highest expression levels in kidney, lung and liver (at protein level).

The protein resides in the cell membrane. The catalysed reaction is Random hydrolysis of (1-&gt;4)-linkages between N-acetyl-beta-D-glucosamine and D-glucuronate residues in hyaluronate.. Its function is as follows. Catalyzes hyaluronan degradation into small fragments that are endocytosed and degraded in lysosomes by HYAL1 and exoglycosidases. Essential for the breakdown of extracellular matrix hyaluronan. This chain is Hyaluronidase-2 (Hyal2), found in Mus musculus (Mouse).